The following is a 31-amino-acid chain: Kappa-theraphotoxin-Ps1b (31 aa).

Cystine bridges form between Cys2–Cys16, Cys9–Cys21, and Cys15–Cys25. Met31 is modified (methionine amide).

The protein belongs to the neurotoxin 30 (phrixotoxin) family. In terms of tissue distribution, expressed by the venom gland.

It is found in the secreted. Functionally, potent and specific blocker of Kv4.2/KCND2 (IC(50)=34 nM) and Kv4.3/KCND3 (IC(50)=71 nM) potassium channels. Acts by altering the gating properties of these channels. This Paraphysa scrofa (Chilean copper tarantula) protein is Kappa-theraphotoxin-Ps1b.